Reading from the N-terminus, the 353-residue chain is Photosystem II protein D1 (353 aa).

Threonine 2 bears the N-acetylthreonine mark. Threonine 2 carries the post-translational modification Phosphothreonine. The next 3 helical transmembrane spans lie at 29–46 (YIGW…TATS), 118–133 (HFLL…EWEL), and 142–156 (WIAV…AATA). Position 118 (histidine 118) interacts with chlorophyll a. Tyrosine 126 contacts pheophytin a. Positions 170 and 189 each coordinate [CaMn4O5] cluster. The chain crosses the membrane as a helical span at residues 197-218 (FHMLGVAGVFGGSLFSAMHGSL). Histidine 198 is a chlorophyll a binding site. Residues histidine 215 and 264–265 (SF) contribute to the a quinone site. Histidine 215 is a Fe cation binding site. Histidine 272 lines the Fe cation pocket. A helical transmembrane segment spans residues 274–288 (FLAAWPVVGIWFTAL). Residues histidine 332, glutamate 333, aspartate 342, and alanine 344 each coordinate [CaMn4O5] cluster. Residues 345–353 (AVEAPSTNG) constitute a propeptide that is removed on maturation.

This sequence belongs to the reaction center PufL/M/PsbA/D family. In terms of assembly, PSII is composed of 1 copy each of membrane proteins PsbA, PsbB, PsbC, PsbD, PsbE, PsbF, PsbH, PsbI, PsbJ, PsbK, PsbL, PsbM, PsbT, PsbX, PsbY, PsbZ, Psb30/Ycf12, at least 3 peripheral proteins of the oxygen-evolving complex and a large number of cofactors. It forms dimeric complexes. The D1/D2 heterodimer binds P680, chlorophylls that are the primary electron donor of PSII, and subsequent electron acceptors. It shares a non-heme iron and each subunit binds pheophytin, quinone, additional chlorophylls, carotenoids and lipids. D1 provides most of the ligands for the Mn4-Ca-O5 cluster of the oxygen-evolving complex (OEC). There is also a Cl(-1) ion associated with D1 and D2, which is required for oxygen evolution. The PSII complex binds additional chlorophylls, carotenoids and specific lipids. is required as a cofactor. In terms of processing, tyr-161 forms a radical intermediate that is referred to as redox-active TyrZ, YZ or Y-Z. C-terminally processed by CTPA; processing is essential to allow assembly of the oxygen-evolving complex and thus photosynthetic growth.

It is found in the plastid. The protein resides in the chloroplast thylakoid membrane. The catalysed reaction is 2 a plastoquinone + 4 hnu + 2 H2O = 2 a plastoquinol + O2. Its function is as follows. Photosystem II (PSII) is a light-driven water:plastoquinone oxidoreductase that uses light energy to abstract electrons from H(2)O, generating O(2) and a proton gradient subsequently used for ATP formation. It consists of a core antenna complex that captures photons, and an electron transfer chain that converts photonic excitation into a charge separation. The D1/D2 (PsbA/PsbD) reaction center heterodimer binds P680, the primary electron donor of PSII as well as several subsequent electron acceptors. This chain is Photosystem II protein D1, found in Lepidium virginicum (Virginia pepperweed).